The chain runs to 482 residues: UDP-N-acetylmuramoyl-L-alanyl-D-glutamate--2,6-diaminopimelate ligase (482 aa).

A UDP-N-acetyl-alpha-D-muramoyl-L-alanyl-D-glutamate-binding site is contributed by Ser30. 111-117 contributes to the ATP binding site; that stretch reads GTNGKTT. UDP-N-acetyl-alpha-D-muramoyl-L-alanyl-D-glutamate-binding positions include 153 to 154, Ser180, Gln186, and Arg188; that span reads TT. Lys220 is modified (N6-carboxylysine). Meso-2,6-diaminopimelate contacts are provided by residues Arg378, 402 to 405, Gly455, and Glu459; that span reads DNPR. Positions 402-405 match the Meso-diaminopimelate recognition motif motif; that stretch reads DNPR.

It belongs to the MurCDEF family. MurE subfamily. The cofactor is Mg(2+). In terms of processing, carboxylation is probably crucial for Mg(2+) binding and, consequently, for the gamma-phosphate positioning of ATP.

Its subcellular location is the cytoplasm. It carries out the reaction UDP-N-acetyl-alpha-D-muramoyl-L-alanyl-D-glutamate + meso-2,6-diaminopimelate + ATP = UDP-N-acetyl-alpha-D-muramoyl-L-alanyl-gamma-D-glutamyl-meso-2,6-diaminopimelate + ADP + phosphate + H(+). It functions in the pathway cell wall biogenesis; peptidoglycan biosynthesis. Its function is as follows. Catalyzes the addition of meso-diaminopimelic acid to the nucleotide precursor UDP-N-acetylmuramoyl-L-alanyl-D-glutamate (UMAG) in the biosynthesis of bacterial cell-wall peptidoglycan. The polypeptide is UDP-N-acetylmuramoyl-L-alanyl-D-glutamate--2,6-diaminopimelate ligase (Bacteroides thetaiotaomicron (strain ATCC 29148 / DSM 2079 / JCM 5827 / CCUG 10774 / NCTC 10582 / VPI-5482 / E50)).